A 402-amino-acid chain; its full sequence is Nicotinate phosphoribosyltransferase (402 aa).

Phosphohistidine; by autocatalysis is present on His-224.

The protein belongs to the NAPRTase family. In terms of processing, transiently phosphorylated on a His residue during the reaction cycle. Phosphorylation strongly increases the affinity for substrates and increases the rate of nicotinate D-ribonucleotide production. Dephosphorylation regenerates the low-affinity form of the enzyme, leading to product release.

It carries out the reaction nicotinate + 5-phospho-alpha-D-ribose 1-diphosphate + ATP + H2O = nicotinate beta-D-ribonucleotide + ADP + phosphate + diphosphate. It functions in the pathway cofactor biosynthesis; NAD(+) biosynthesis; nicotinate D-ribonucleotide from nicotinate: step 1/1. In terms of biological role, catalyzes the synthesis of beta-nicotinate D-ribonucleotide from nicotinate and 5-phospho-D-ribose 1-phosphate at the expense of ATP. This Neisseria meningitidis serogroup A / serotype 4A (strain DSM 15465 / Z2491) protein is Nicotinate phosphoribosyltransferase.